Consider the following 84-residue polypeptide: Large ribosomal subunit protein bL27 (84 aa).

The disordered stretch occupies residues 1–21 (MATKKAGGSSRNGRDSAGRRL).

The protein belongs to the bacterial ribosomal protein bL27 family.

This Pelagibacter ubique (strain HTCC1062) protein is Large ribosomal subunit protein bL27.